The sequence spans 589 residues: Protein POF1B (589 aa).

A coiled-coil region spans residues 334–443 (TFSNIREELG…QNLRMQVSET (110 aa)).

As to quaternary structure, interacts with nonmuscle actin.

The protein localises to the cell junction. Its subcellular location is the tight junction. Its function is as follows. Plays a key role in the organization of epithelial monolayers by regulating the actin cytoskeleton. May be involved in ovary development. The protein is Protein POF1B (POF1B) of Homo sapiens (Human).